The following is a 244-amino-acid chain: MSDTPQSPAQGSLAEHDEARPMRTVKSFVMRAGRMTEGQQRGLDLGWPKFGLELSDEVQDFDAIFGRQAPRTFEIGFGMGHSTLEMAAAAPDIDFIGVEVHKPGVGALLNGLLTQGLGNVRVYSCDALEVLRHCVADASLDRLLLFFPDPWHKKRHHKRRIVQPEFAELVRRKLKVGGVLHMATDWEPYAEHMLDVMSAAPGYRNQAEDGRFVARPQERPVTKFERRGERLGHGVWDLKFERID.

The span at 1–10 (MSDTPQSPAQ) shows a compositional bias: polar residues. Positions 1 to 20 (MSDTPQSPAQGSLAEHDEAR) are disordered. 4 residues coordinate S-adenosyl-L-methionine: E74, E99, D126, and D149. D149 is an active-site residue. Substrate-binding positions include K153, D185, and 222–225 (TKFE).

The protein belongs to the class I-like SAM-binding methyltransferase superfamily. TrmB family.

The enzyme catalyses guanosine(46) in tRNA + S-adenosyl-L-methionine = N(7)-methylguanosine(46) in tRNA + S-adenosyl-L-homocysteine. The protein operates within tRNA modification; N(7)-methylguanine-tRNA biosynthesis. In terms of biological role, catalyzes the formation of N(7)-methylguanine at position 46 (m7G46) in tRNA. This chain is tRNA (guanine-N(7)-)-methyltransferase, found in Pseudomonas aeruginosa (strain UCBPP-PA14).